Consider the following 479-residue polypeptide: Ribosomal RNA small subunit methyltransferase F (479 aa).

S-adenosyl-L-methionine contacts are provided by residues 125–131 (AAAPGSK), Glu-149, Asp-176, and Asp-194. Cys-247 serves as the catalytic Nucleophile.

It belongs to the class I-like SAM-binding methyltransferase superfamily. RsmB/NOP family.

It is found in the cytoplasm. It carries out the reaction cytidine(1407) in 16S rRNA + S-adenosyl-L-methionine = 5-methylcytidine(1407) in 16S rRNA + S-adenosyl-L-homocysteine + H(+). Functionally, specifically methylates the cytosine at position 1407 (m5C1407) of 16S rRNA. This is Ribosomal RNA small subunit methyltransferase F from Escherichia coli (strain ATCC 8739 / DSM 1576 / NBRC 3972 / NCIMB 8545 / WDCM 00012 / Crooks).